The following is a 758-amino-acid chain: 5-methyltetrahydropteroyltriglutamate--homocysteine methyltransferase (758 aa).

5-methyltetrahydropteroyltri-L-glutamate is bound by residues 17–20 and Lys-117; that span reads RELK. Residues 434 to 436 and Glu-487 contribute to the L-homocysteine site; that span reads IGS. Residues 434–436 and Glu-487 each bind L-methionine; that span reads IGS. Residues 518-519 and Trp-564 contribute to the 5-methyltetrahydropteroyltri-L-glutamate site; that span reads RC. Asp-602 provides a ligand contact to L-homocysteine. Residue Asp-602 coordinates L-methionine. Residue Glu-608 participates in 5-methyltetrahydropteroyltri-L-glutamate binding. Residues His-644, Cys-646, and Glu-668 each coordinate Zn(2+). His-697 acts as the Proton donor in catalysis. Cys-729 serves as a coordination point for Zn(2+).

This sequence belongs to the vitamin-B12 independent methionine synthase family. Requires Zn(2+) as cofactor.

It carries out the reaction 5-methyltetrahydropteroyltri-L-glutamate + L-homocysteine = tetrahydropteroyltri-L-glutamate + L-methionine. Its pathway is amino-acid biosynthesis; L-methionine biosynthesis via de novo pathway; L-methionine from L-homocysteine (MetE route): step 1/1. Catalyzes the transfer of a methyl group from 5-methyltetrahydrofolate to homocysteine resulting in methionine formation. The polypeptide is 5-methyltetrahydropteroyltriglutamate--homocysteine methyltransferase (Photorhabdus laumondii subsp. laumondii (strain DSM 15139 / CIP 105565 / TT01) (Photorhabdus luminescens subsp. laumondii)).